We begin with the raw amino-acid sequence, 195 residues long: Protein lin-28 homolog A (195 aa).

Positions 33 to 106 (QGSGVCKWFN…GLESTQVTGP (74 aa)) constitute a CSD domain. Residues 98-127 (LESTQVTGPGGAPCIGSERRPKVKGQQKRR) form a disordered region. The flexible linker stretch occupies residues 107–130 (GGAPCIGSERRPKVKGQQKRRQRG). The span at 118–127 (PKVKGQQKRR) shows a compositional bias: basic residues. 2 CCHC-type zinc fingers span residues 131 to 148 (DRCY…ECKL) and 153 to 170 (KKCH…QCPE). Cys-133, Cys-136, His-141, Cys-146, Cys-155, Cys-158, His-163, and Cys-168 together coordinate Zn(2+).

Belongs to the lin-28 family. In terms of assembly, monomer.

It is found in the cytoplasm. It localises to the rough endoplasmic reticulum. Its subcellular location is the P-body. The protein resides in the stress granule. The protein localises to the nucleus. It is found in the nucleolus. Its function is as follows. RNA-binding protein that inhibits processing of pre-let-7 miRNAs and regulates translation of mRNAs that control developmental timing, pluripotency and metabolism. Seems to recognize a common structural G-quartet (G4) feature in its miRNA and mRNA targets. 'Translational enhancer' that drives specific mRNAs to polysomes and increases the efficiency of protein synthesis. Its association with the translational machinery and target mRNAs results in an increased number of initiation events per molecule of mRNA and, indirectly, in mRNA stabilization. Suppressor of microRNA (miRNA) biogenesis, including that of let-7. Binds specific target miRNA precursors (pre-miRNAs), recognizing an 5'-GGAG-3' motif found in their terminal loop, and recruits uridylyltransferase. This results in the terminal uridylation of target pre-miRNAs. Uridylated pre-miRNAs fail to be processed by Dicer and undergo degradation. Localized to the periendoplasmic reticulum area, binds to a large number of spliced mRNAs and inhibits the translation of mRNAs destined for the ER, reducing the synthesis of transmembrane proteins, ER or Golgi lumen proteins, and secretory proteins. Binds to and enhances the translation of mRNAs for several metabolic enzymes, increasing glycolysis and oxidative phosphorylation. Which, with the let-7 repression may enhance tissue repair in adult tissue. This Xenopus laevis (African clawed frog) protein is Protein lin-28 homolog A (lin28a).